The primary structure comprises 316 residues: N-acetyl-gamma-glutamyl-phosphate reductase (316 aa).

Residue C136 is part of the active site.

Belongs to the NAGSA dehydrogenase family. Type 1 subfamily.

It localises to the cytoplasm. It carries out the reaction N-acetyl-L-glutamate 5-semialdehyde + phosphate + NADP(+) = N-acetyl-L-glutamyl 5-phosphate + NADPH + H(+). It functions in the pathway amino-acid biosynthesis; L-arginine biosynthesis; N(2)-acetyl-L-ornithine from L-glutamate: step 3/4. Catalyzes the NADPH-dependent reduction of N-acetyl-5-glutamyl phosphate to yield N-acetyl-L-glutamate 5-semialdehyde. The chain is N-acetyl-gamma-glutamyl-phosphate reductase from Xanthomonas oryzae pv. oryzae (strain MAFF 311018).